The following is a 269-amino-acid chain: 4-hydroxy-tetrahydrodipicolinate reductase (269 aa).

NAD(+)-binding positions include 8 to 13 and E34; that span reads GAAGRM. NADP(+) is bound at residue R35. Residues 98–100 and 122–125 contribute to the NAD(+) site; these read GTT and APNY. H155 acts as the Proton donor/acceptor in catalysis. H156 contacts (S)-2,3,4,5-tetrahydrodipicolinate. K159 functions as the Proton donor in the catalytic mechanism. 165–166 lines the (S)-2,3,4,5-tetrahydrodipicolinate pocket; the sequence is GT.

The protein belongs to the DapB family.

The protein localises to the cytoplasm. It carries out the reaction (S)-2,3,4,5-tetrahydrodipicolinate + NAD(+) + H2O = (2S,4S)-4-hydroxy-2,3,4,5-tetrahydrodipicolinate + NADH + H(+). The catalysed reaction is (S)-2,3,4,5-tetrahydrodipicolinate + NADP(+) + H2O = (2S,4S)-4-hydroxy-2,3,4,5-tetrahydrodipicolinate + NADPH + H(+). It participates in amino-acid biosynthesis; L-lysine biosynthesis via DAP pathway; (S)-tetrahydrodipicolinate from L-aspartate: step 4/4. Its function is as follows. Catalyzes the conversion of 4-hydroxy-tetrahydrodipicolinate (HTPA) to tetrahydrodipicolinate. This Vibrio campbellii (strain ATCC BAA-1116) protein is 4-hydroxy-tetrahydrodipicolinate reductase.